Reading from the N-terminus, the 642-residue chain is Kinesin-like protein KIN-7L (642 aa).

The Kinesin motor domain occupies 3–337; it reads KISVAVRFRP…LQFASRAKCV (335 aa). The span at 12 to 27 shows a compositional bias: low complexity; sequence PPTTAAPAADQSPSST. The segment at 12–33 is disordered; that stretch reads PPTTAAPAADQSPSSTGGDREW. 94–101 contacts ATP; sequence GQTSSGKT. Coiled coils occupy residues 343–428 and 540–612; these read VNEI…SNTS and RQQL…FSQA.

This sequence belongs to the TRAFAC class myosin-kinesin ATPase superfamily. Kinesin family. KIN-7 subfamily.

This chain is Kinesin-like protein KIN-7L, found in Oryza sativa subsp. japonica (Rice).